The chain runs to 262 residues: tRNA pseudouridine synthase A (262 aa).

Aspartate 52 (nucleophile) is an active-site residue. Tyrosine 110 contacts substrate.

This sequence belongs to the tRNA pseudouridine synthase TruA family. As to quaternary structure, homodimer.

It catalyses the reaction uridine(38/39/40) in tRNA = pseudouridine(38/39/40) in tRNA. In terms of biological role, formation of pseudouridine at positions 38, 39 and 40 in the anticodon stem and loop of transfer RNAs. The protein is tRNA pseudouridine synthase A of Chromobacterium violaceum (strain ATCC 12472 / DSM 30191 / JCM 1249 / CCUG 213 / NBRC 12614 / NCIMB 9131 / NCTC 9757 / MK).